The chain runs to 4599 residues: Low-density lipoprotein receptor-related protein 1B (4599 aa).

An N-terminal signal peptide occupies residues 1–20; sequence MSEFLLALLTLSGLLPIARV. The Extracellular portion of the chain corresponds to 25–4444; the sequence is ADRDQQLCDP…KSDHISTRSI (4420 aa). 2 LDL-receptor class A domains span residues 31 to 70 and 76 to 114; these read LCDP…DTCP and KCPL…VHCQ. Intrachain disulfides connect Cys-32/Cys-45, Cys-39/Cys-58, Cys-52/Cys-69, Cys-77/Cys-90, Cys-84/Cys-103, Cys-97/Cys-113, Cys-120/Cys-129, Cys-125/Cys-138, Cys-140/Cys-153, Cys-159/Cys-169, Cys-165/Cys-178, and Cys-180/Cys-193. Residues 116–154 form the EGF-like 1 domain; sequence LLSNCQQLNCQYKCTMVRNSTRCYCEDGFEITEDGRSCK. Asn-134 carries an N-linked (GlcNAc...) asparagine glycan. Residues 155–194 form the EGF-like 2; calcium-binding domain; it reads DQDECAVYGTCSQTCRNTHGSYTCSCVEGYLMQPDNRSCK. Residues Asn-190, Asn-220, Asn-313, and Asn-360 are each glycosylated (N-linked (GlcNAc...) asparagine). LDL-receptor class B repeat units follow at residues 295 to 337, 338 to 381, and 382 to 425; these read RNLY…DPIA, GKLF…DLVN, and KLVY…FEDY. Residue Asn-443 is glycosylated (N-linked (GlcNAc...) asparagine). The EGF-like 3 domain occupies 471 to 517; it reads RSHACEVDPYGMPGGCSHICLLSSSYKTRTCRCRTGFNLGSDGRSCK. LDL-receptor class B repeat units lie at residues 568 to 610, 611 to 656, 657 to 706, and 707 to 750; these read NYIY…DWIG, NNLY…DPVN, GWMY…DFHT, and NTLY…HGNY. N-linked (GlcNAc...) asparagine glycans are attached at residues Asn-725 and Asn-758. Residues 794-834 form the EGF-like 4 domain; it reads GDNMCRVNNGGCSTLCLAIPGGRVCACADNQLLDENGTTCT. 6 cysteine pairs are disulfide-bonded: Cys-798–Cys-809, Cys-805–Cys-818, Cys-820–Cys-833, Cys-845–Cys-857, Cys-852–Cys-870, and Cys-864–Cys-881. The N-linked (GlcNAc...) asparagine glycan is linked to Asn-829. The 39-residue stretch at 844 to 882 folds into the LDL-receptor class A 3 domain; sequence ICKAGEFRCKNRHCIQARWKCDGDDDCLDGSDEDSVNCF. N-linked (GlcNAc...) asparagine glycosylation occurs at Asn-883. LDL-receptor class A domains are found at residues 885 to 923, 926 to 963, 966 to 1003, 1005 to 1043, 1052 to 1089, 1094 to 1132, and 1135 to 1174; these read SCPD…QTCT, TCQV…ASCE, TCEP…VGCV, SCFD…INCT, GCNG…KGCN, LCDH…DDCD, and LCGP…YLCD. Disulfide bonds link Cys-886-Cys-898, Cys-893-Cys-911, Cys-905-Cys-922, Cys-927-Cys-939, Cys-934-Cys-952, Cys-946-Cys-962, Cys-967-Cys-980, Cys-975-Cys-993, Cys-987-Cys-1002, Cys-1006-Cys-1018, Cys-1013-Cys-1031, Cys-1025-Cys-1042, Cys-1053-Cys-1066, Cys-1060-Cys-1079, and Cys-1073-Cys-1088. Asn-919 is a glycosylation site (N-linked (GlcNAc...) asparagine). Asn-1041 carries N-linked (GlcNAc...) asparagine glycosylation. Asn-1089 carries N-linked (GlcNAc...) asparagine glycosylation. Cystine bridges form between Cys-1095-Cys-1109, Cys-1103-Cys-1122, Cys-1116-Cys-1131, Cys-1136-Cys-1150, Cys-1143-Cys-1163, and Cys-1157-Cys-1173. The N-linked (GlcNAc...) asparagine glycan is linked to Asn-1145. 2 consecutive EGF-like domains span residues 1174–1213 and 1214–1253; these read DECS…KTCE and IVDY…ESCT. A glycan (N-linked (GlcNAc...) asparagine) is linked at Asn-1209. Asn-1298 carries N-linked (GlcNAc...) asparagine glycosylation. 5 LDL-receptor class B repeats span residues 1300–1346, 1347–1389, 1390–1436, 1437–1480, and 1481–1522; these read SLLY…DWIA, GNIY…DPRY, GILF…DHFE, KRIV…LYGS, and EVYW…YHPS. 3 N-linked (GlcNAc...) asparagine glycosylation sites follow: Asn-1502, Asn-1549, and Asn-1636. An EGF-like 7 domain is found at 1527-1570; sequence APNPCAANDGKGPCSHMCLINHNRSAACACPHLMKLSSDKKTCY. 4 LDL-receptor class B repeats span residues 1618-1660, 1661-1704, 1705-1744, and 1745-1787; these read ERLY…DWVS, RNLY…HPVR, GKLY…DYVE, and NKLY…TIMD. N-linked (GlcNAc...) asparagine glycosylation is found at Asn-1754 and Asn-1816. Residues 1834–1875 enclose the EGF-like 8 domain; sequence GSNSCQLNNGGCSQLCLPTSETTRTCMCTVGYYLQKNRMSCQ. Intrachain disulfides connect Cys-1838–Cys-1849, Cys-1845–Cys-1859, and Cys-1861–Cys-1874. The N-linked (GlcNAc...) asparagine glycan is linked to Asn-1921. LDL-receptor class B repeat units lie at residues 1922–1964, 1965–2007, 2008–2051, and 2052–2095; these read DTIY…DWIA, GNIY…HPEK, GLLF…DYEE, and NKLY…FGAY. Asn-1983 carries an N-linked (GlcNAc...) asparagine glycan. A glycan (N-linked (GlcNAc...) asparagine) is linked at Asn-2105. Positions 2143–2183 constitute an EGF-like 9 domain; that stretch reads GTNVCARDNGGCKQLCLYRGNSRRTCACAHGYLAEDGVTCL. Disulfide bonds link Cys-2147–Cys-2158, Cys-2154–Cys-2168, and Cys-2170–Cys-2182. LDL-receptor class B repeat units follow at residues 2239 to 2280, 2281 to 2329, 2330 to 2374, 2375 to 2416, and 2417 to 2459; these read NRIF…HRAW, DTLY…DECQ, NLMF…DYRA, EKLY…VYDN, and YIFW…VAND. 3 N-linked (GlcNAc...) asparagine glycosylation sites follow: Asn-2458, Asn-2488, and Asn-2507. Residues 2464–2504 form the EGF-like 10 domain; that stretch reads ELSPCALLNGGCHDLCLLTPNGRVNCSCRGDRILLEDNRCV. The region spanning 2509 to 2548 is the LDL-receptor class A 11 domain; sequence SCNAYSEFECGNGECIDYQLTCDGIPHCKDKSDEKLLYCE. 3 cysteine pairs are disulfide-bonded: Cys-2510–Cys-2523, Cys-2518–Cys-2536, and Cys-2530–Cys-2547. A glycan (N-linked (GlcNAc...) asparagine) is linked at Asn-2549. LDL-receptor class A domains are found at residues 2551 to 2587, 2590 to 2626, 2629 to 2675, 2681 to 2717, 2719 to 2757, and 2760 to 2800; these read SCRR…LDCK, TCAT…KNCN, DCTH…LKCP, KCEE…FHCD, SCSW…SICG, and TCAA…AGCA. 6 disulfide bridges follow: Cys-2552–Cys-2564, Cys-2559–Cys-2577, Cys-2571–Cys-2586, Cys-2591–Cys-2603, Cys-2598–Cys-2616, and Cys-2610–Cys-2625. Asn-2626 and Asn-2647 each carry an N-linked (GlcNAc...) asparagine glycan. Disulfide bonds link Cys-2630–Cys-2652, Cys-2646–Cys-2665, Cys-2659–Cys-2674, Cys-2682–Cys-2694, Cys-2689–Cys-2707, Cys-2701–Cys-2716, Cys-2720–Cys-2732, Cys-2727–Cys-2745, Cys-2739–Cys-2756, Cys-2761–Cys-2774, Cys-2768–Cys-2787, and Cys-2781–Cys-2799. Residue Asn-2802 is glycosylated (N-linked (GlcNAc...) asparagine). 3 LDL-receptor class A domains span residues 2804-2841, 2844-2885, and 2890-2926; these read TCDE…PQCG, QCGT…PKCK, and SCNS…RNCH. 15 disulfides stabilise this stretch: Cys-2805-Cys-2817, Cys-2812-Cys-2830, Cys-2824-Cys-2840, Cys-2845-Cys-2857, Cys-2852-Cys-2871, Cys-2865-Cys-2884, Cys-2891-Cys-2903, Cys-2898-Cys-2916, Cys-2910-Cys-2925, Cys-2930-Cys-2942, Cys-2938-Cys-2951, Cys-2953-Cys-2966, Cys-2972-Cys-2982, Cys-2978-Cys-2991, and Cys-2993-Cys-3007. Asn-2892 is a glycosylation site (N-linked (GlcNAc...) asparagine). Residues 2927 to 2967 enclose the EGF-like 11 domain; that stretch reads INECLSKKVSGCSQDCQDLPVSYKCKCWPGFQLKDDGKTCV. In terms of domain architecture, EGF-like 12; calcium-binding spans 2968 to 3008; the sequence is DIDECSSGFPCSQQCINTYGTYKCLCTDGYEIQPDNPNGCK. 3 N-linked (GlcNAc...) asparagine glycosylation sites follow: Asn-3034, Asn-3066, and Asn-3076. 5 LDL-receptor class B repeats span residues 3055–3098, 3099–3141, 3142–3185, 3186–3224, and 3225–3268; these read EFIY…DWIG, KNLY…DPQA, GYLY…DYVN, RRLY…TLFE, and DYIY…HSYR. Asn-3164 carries an N-linked (GlcNAc...) asparagine glycan. In terms of domain architecture, EGF-like 13 spans 3273–3314; sequence SKHLCMINNGGCSHLCLLAPGKTHTCACPTNFYLAADNRTCL. Residues Asn-3310 and Asn-3316 are each glycosylated (N-linked (GlcNAc...) asparagine). LDL-receptor class A domains are found at residues 3316–3353, 3356–3392, 3395–3432, 3435–3472, 3475–3511, 3514–3550, 3552–3588, 3593–3629, 3631–3668, 3673–3711, 3714–3752, and 3761–3797; these read NCTA…DDCP, RCQP…LNCD, VCLS…RDCP, SCSP…ANCD, TCGP…ENCK, TCTL…RNCE, SCSK…KSCE, TCSS…MDCV, ECKE…ENCE, ICRA…DMCV, LCPS…DHCG, and PCKK…QGCR. 42 disulfides stabilise this stretch: Cys-3317/Cys-3329, Cys-3324/Cys-3342, Cys-3336/Cys-3352, Cys-3357/Cys-3369, Cys-3364/Cys-3382, Cys-3376/Cys-3391, Cys-3396/Cys-3409, Cys-3403/Cys-3422, Cys-3416/Cys-3431, Cys-3436/Cys-3449, Cys-3443/Cys-3462, Cys-3456/Cys-3471, Cys-3476/Cys-3488, Cys-3483/Cys-3501, Cys-3495/Cys-3510, Cys-3515/Cys-3527, Cys-3522/Cys-3540, Cys-3534/Cys-3549, Cys-3553/Cys-3565, Cys-3560/Cys-3578, Cys-3572/Cys-3587, Cys-3594/Cys-3606, Cys-3601/Cys-3619, Cys-3613/Cys-3628, Cys-3632/Cys-3645, Cys-3639/Cys-3658, Cys-3652/Cys-3667, Cys-3674/Cys-3686, Cys-3681/Cys-3699, Cys-3693/Cys-3710, Cys-3715/Cys-3729, Cys-3723/Cys-3742, Cys-3736/Cys-3751, Cys-3762/Cys-3774, Cys-3769/Cys-3787, Cys-3781/Cys-3796, Cys-3805/Cys-3818, Cys-3812/Cys-3827, Cys-3829/Cys-3842, Cys-3848/Cys-3858, Cys-3854/Cys-3867, and Cys-3869/Cys-3880. Asn-3682 carries N-linked (GlcNAc...) asparagine glycosylation. EGF-like domains are found at residues 3801–3843 and 3844–3881; these read TEYT…RQCE and DLNE…NTCI. Residues Asn-3877, Asn-3894, and Asn-3906 are each glycosylated (N-linked (GlcNAc...) asparagine). LDL-receptor class B repeat units lie at residues 3933 to 3980, 3981 to 4038, 4039 to 4082, and 4083 to 4127; these read DMII…DWVA, GNIY…NPKR, GMMY…DYFS, and ERIY…FEDY. A glycan (N-linked (GlcNAc...) asparagine) is linked at Asn-4017. EGF-like domains are found at residues 4171–4208, 4213–4249, 4249–4285, 4285–4321, 4321–4357, 4357–4392, and 4390–4427; these read DLPN…GTCN, LDDS…ERCE, EVNH…PNCG, GKTV…DRCQ, QYYV…PKCE, EVDK…SSCQ, and SCQL…TQCE. Asn-4204 carries an N-linked (GlcNAc...) asparagine glycan. Cystine bridges form between Cys-4217/Cys-4227, Cys-4221/Cys-4237, Cys-4253/Cys-4263, Cys-4257/Cys-4273, Cys-4275/Cys-4284, Cys-4289/Cys-4299, Cys-4293/Cys-4309, Cys-4311/Cys-4320, Cys-4325/Cys-4335, Cys-4329/Cys-4345, and Cys-4347/Cys-4356. N-linked (GlcNAc...) asparagine glycosylation is present at Asn-4381. Intrachain disulfides connect Cys-4394–Cys-4404, Cys-4398–Cys-4415, and Cys-4417–Cys-4426. Asn-4420 is a glycosylation site (N-linked (GlcNAc...) asparagine). Residues 4445 to 4467 form a helical membrane-spanning segment; it reads AIIVPLVLLVTLITTLVIGLVLC. Over 4468–4599 the chain is Cytoplasmic; the sequence is KRKRRTKTIR…IEIGIRETVA (132 aa). 2 consecutive short sequence motifs (endocytosis signal) follow at residues 4492–4495 and 4559–4562; these read NPSY and NPVY.

The protein belongs to the LDLR family. Binds LRPAP1, PLAU, PLAT and SERPINE1; binding is followed by internalization and degradation of the ligands. Expressed in thyroid gland and in salivary gland, as well as in adult and fetal brain.

It localises to the membrane. Its function is as follows. Potential cell surface proteins that bind and internalize ligands in the process of receptor-mediated endocytosis. This Homo sapiens (Human) protein is Low-density lipoprotein receptor-related protein 1B (LRP1B).